Here is a 550-residue protein sequence, read N- to C-terminus: Hydroxylamine reductase (550 aa).

Residues cysteine 3, cysteine 6, cysteine 18, and cysteine 25 each coordinate [2Fe-2S] cluster. Hybrid [4Fe-2O-2S] cluster contacts are provided by histidine 249, glutamate 273, cysteine 317, cysteine 405, cysteine 433, cysteine 458, glutamate 492, and lysine 494. Cysteine 405 bears the Cysteine persulfide mark.

This sequence belongs to the HCP family. It depends on [2Fe-2S] cluster as a cofactor. Hybrid [4Fe-2O-2S] cluster serves as cofactor.

Its subcellular location is the cytoplasm. The enzyme catalyses A + NH4(+) + H2O = hydroxylamine + AH2 + H(+). Its function is as follows. Catalyzes the reduction of hydroxylamine to form NH(3) and H(2)O. This Shigella flexneri serotype 5b (strain 8401) protein is Hydroxylamine reductase.